The chain runs to 98 residues: DNA/RNA-binding protein Alba (98 aa).

At Lys-16 the chain carries N6-acetyllysine.

This sequence belongs to the histone-like Alba family. Acetylated. Acetylation at Lys-16 decreases DNA-binding affinity.

It is found in the cytoplasm. It localises to the chromosome. In terms of biological role, binds double-stranded DNA tightly but without sequence specificity. Involved in DNA compaction. The protein is DNA/RNA-binding protein Alba of Metallosphaera sedula (strain ATCC 51363 / DSM 5348 / JCM 9185 / NBRC 15509 / TH2).